Consider the following 243-residue polypeptide: Small ribosomal subunit protein uS5 (243 aa).

Composition is skewed to basic and acidic residues over residues 1-21 (MPIDKKQEKNFTNKIQEEGQK) and 34-46 (LEEKLNKNPDHKG). Positions 1–85 (MPIDKKQEKN…NFKKNANKKP (85 aa)) are disordered. Positions 89–152 (FEEKIVNIAR…KDAQNNLIRV (64 aa)) constitute an S5 DRBM domain.

Belongs to the universal ribosomal protein uS5 family. In terms of assembly, part of the 30S ribosomal subunit. Contacts proteins S4 and S8.

Functionally, with S4 and S12 plays an important role in translational accuracy. In terms of biological role, located at the back of the 30S subunit body where it stabilizes the conformation of the head with respect to the body. The sequence is that of Small ribosomal subunit protein uS5 from Mycoplasma mobile (strain ATCC 43663 / 163K / NCTC 11711) (Mesomycoplasma mobile).